We begin with the raw amino-acid sequence, 120 residues long: Small ribosomal subunit protein uS13 (120 aa).

A disordered region spans residues 93-120 (RKGLPVRGQTTKNNARTRKGKKKTVGSK). Residues 107–120 (ARTRKGKKKTVGSK) are compositionally biased toward basic residues.

The protein belongs to the universal ribosomal protein uS13 family. Part of the 30S ribosomal subunit. Forms a loose heterodimer with protein S19. Forms two bridges to the 50S subunit in the 70S ribosome.

Functionally, located at the top of the head of the 30S subunit, it contacts several helices of the 16S rRNA. In the 70S ribosome it contacts the 23S rRNA (bridge B1a) and protein L5 of the 50S subunit (bridge B1b), connecting the 2 subunits; these bridges are implicated in subunit movement. Contacts the tRNAs in the A and P-sites. The polypeptide is Small ribosomal subunit protein uS13 (Helicobacter pylori (strain P12)).